Reading from the N-terminus, the 318-residue chain is NADH-ubiquinone oxidoreductase chain 1 (318 aa).

8 helical membrane-spanning segments follow: residues 2 to 22 (FLINTLLLILPVLLAMAFLTL), 69 to 89 (LLFIIAPTLALTLALSMWLPI), 102 to 122 (ILFILATSSLAVYSILWSGWA), 146 to 166 (LAIILLCILLMNGSFTLSSLI), 171 to 191 (YMWILLPAWPLAMMWFISTLA), 222 to 242 (LFFLAEYTNIILMNALTAILF), 253 to 273 (EMFTVNFATKTLLLTMTFLWI), and 294 to 314 (LPLTLALCMWHISMPIMLSSI).

It belongs to the complex I subunit 1 family. In terms of assembly, core subunit of respiratory chain NADH dehydrogenase (Complex I) which is composed of 45 different subunits.

Its subcellular location is the mitochondrion inner membrane. The enzyme catalyses a ubiquinone + NADH + 5 H(+)(in) = a ubiquinol + NAD(+) + 4 H(+)(out). In terms of biological role, core subunit of the mitochondrial membrane respiratory chain NADH dehydrogenase (Complex I) which catalyzes electron transfer from NADH through the respiratory chain, using ubiquinone as an electron acceptor. Essential for the catalytic activity and assembly of complex I. The sequence is that of NADH-ubiquinone oxidoreductase chain 1 (MT-ND1) from Oryctolagus cuniculus (Rabbit).